Consider the following 439-residue polypeptide: Glutamyl-tRNA reductase (439 aa).

Residues 46–49, S111, 116–118, and Q122 contribute to the substrate site; these read TCNR and EGE. The active-site Nucleophile is C47. 191–196 contacts NADP(+); that stretch reads GTGAYA.

This sequence belongs to the glutamyl-tRNA reductase family. In terms of assembly, homodimer.

It catalyses the reaction (S)-4-amino-5-oxopentanoate + tRNA(Glu) + NADP(+) = L-glutamyl-tRNA(Glu) + NADPH + H(+). It functions in the pathway porphyrin-containing compound metabolism; protoporphyrin-IX biosynthesis; 5-aminolevulinate from L-glutamyl-tRNA(Glu): step 1/2. In terms of biological role, catalyzes the NADPH-dependent reduction of glutamyl-tRNA(Glu) to glutamate 1-semialdehyde (GSA). The polypeptide is Glutamyl-tRNA reductase (Clavibacter michiganensis subsp. michiganensis (strain NCPPB 382)).